We begin with the raw amino-acid sequence, 104 residues long: Nucleoid-associated protein OB0030 (104 aa).

Residues Met1–Gln23 form a disordered region.

This sequence belongs to the YbaB/EbfC family. Homodimer.

It localises to the cytoplasm. It is found in the nucleoid. In terms of biological role, binds to DNA and alters its conformation. May be involved in regulation of gene expression, nucleoid organization and DNA protection. This chain is Nucleoid-associated protein OB0030, found in Oceanobacillus iheyensis (strain DSM 14371 / CIP 107618 / JCM 11309 / KCTC 3954 / HTE831).